Consider the following 904-residue polypeptide: Alanine--tRNA ligase (904 aa).

Zn(2+) contacts are provided by His600, His604, Cys704, and His708.

Belongs to the class-II aminoacyl-tRNA synthetase family. Zn(2+) serves as cofactor.

It is found in the cytoplasm. The catalysed reaction is tRNA(Ala) + L-alanine + ATP = L-alanyl-tRNA(Ala) + AMP + diphosphate. Functionally, catalyzes the attachment of alanine to tRNA(Ala) in a two-step reaction: alanine is first activated by ATP to form Ala-AMP and then transferred to the acceptor end of tRNA(Ala). Also edits incorrectly charged Ser-tRNA(Ala) and Gly-tRNA(Ala) via its editing domain. The protein is Alanine--tRNA ligase of Metallosphaera sedula (strain ATCC 51363 / DSM 5348 / JCM 9185 / NBRC 15509 / TH2).